The following is a 92-amino-acid chain: Large ribosomal subunit protein bL36m (92 aa).

Residues 1-54 (MASLGRKFFAVGVLSRVFPSAFNAQKGLLKNASMFLTPAFRLSPSLLPWNFSRG) constitute a mitochondrion transit peptide.

The protein belongs to the bacterial ribosomal protein bL36 family. As to quaternary structure, component of the mitochondrial large ribosomal subunit (mt-LSU). Mature yeast 74S mitochondrial ribosomes consist of a small (37S) and a large (54S) subunit. The 37S small subunit contains a 15S ribosomal RNA (15S mt-rRNA) and at least 32 different proteins. The 54S large subunit contains a 21S rRNA (21S mt-rRNA) and at least 45 different proteins. bL36m has a zinc binding site.

It localises to the mitochondrion. Component of the mitochondrial ribosome (mitoribosome), a dedicated translation machinery responsible for the synthesis of mitochondrial genome-encoded proteins, including at least some of the essential transmembrane subunits of the mitochondrial respiratory chain. The mitoribosomes are attached to the mitochondrial inner membrane and translation products are cotranslationally integrated into the membrane. bL36m may be involved in a process influencing telomere capping. The chain is Large ribosomal subunit protein bL36m (rtc6) from Schizosaccharomyces pombe (strain 972 / ATCC 24843) (Fission yeast).